The primary structure comprises 100 residues: Large ribosomal subunit protein uL23 (100 aa).

Belongs to the universal ribosomal protein uL23 family. Part of the 50S ribosomal subunit. Contacts protein L29, and trigger factor when it is bound to the ribosome.

One of the early assembly proteins it binds 23S rRNA. One of the proteins that surrounds the polypeptide exit tunnel on the outside of the ribosome. Forms the main docking site for trigger factor binding to the ribosome. This is Large ribosomal subunit protein uL23 from Rippkaea orientalis (strain PCC 8801 / RF-1) (Cyanothece sp. (strain PCC 8801)).